We begin with the raw amino-acid sequence, 199 residues long: Mediator of RNA polymerase II transcription subunit 10 (199 aa).

This sequence belongs to the Mediator complex subunit 10 family. Component of the Mediator complex.

It is found in the nucleus. Functionally, component of the Mediator complex, a coactivator involved in the regulated transcription of nearly all RNA polymerase II-dependent genes. Mediator functions as a bridge to convey information from gene-specific regulatory proteins to the basal RNA polymerase II transcription machinery. Mediator is recruited to promoters by direct interactions with regulatory proteins and serves as a scaffold for the assembly of a functional preinitiation complex with RNA polymerase II and the general transcription factors. This is Mediator of RNA polymerase II transcription subunit 10 (NUT2) from Candida glabrata (strain ATCC 2001 / BCRC 20586 / JCM 3761 / NBRC 0622 / NRRL Y-65 / CBS 138) (Yeast).